An 828-amino-acid chain; its full sequence is Periplasmic nitrate reductase (828 aa).

The segment at residues 1–31 (MKLSRRSFMKANAVAAAAAAAGLSVPGVARA) is a signal peptide (tat-type signal). A 4Fe-4S Mo/W bis-MGD-type domain is found at 39–95 (IKWDKAPCRFCGTGCGVLVGTQQGRVVACQGDPDAPVNRGLNCIKGYFLPKIMYGKD). The [4Fe-4S] cluster site is built by Cys46, Cys49, Cys53, and Cys81. Residues Lys83, Gln150, Asn175, Cys179, 212 to 219 (WGANMAEM), 243 to 247 (STYQH), 262 to 264 (QSD), Met372, Gln376, Asn482, 508 to 509 (SD), Lys531, Asp558, and 718 to 727 (TGRVLEHWHT) contribute to the Mo-bis(molybdopterin guanine dinucleotide) site. Phe794 contacts substrate. Residues Asn802 and Lys819 each contribute to the Mo-bis(molybdopterin guanine dinucleotide) site.

It belongs to the prokaryotic molybdopterin-containing oxidoreductase family. NasA/NapA/NarB subfamily. In terms of assembly, component of the periplasmic nitrate reductase NapAB complex composed of NapA and NapB. [4Fe-4S] cluster serves as cofactor. Requires Mo-bis(molybdopterin guanine dinucleotide) as cofactor. In terms of processing, predicted to be exported by the Tat system. The position of the signal peptide cleavage has not been experimentally proven.

The protein localises to the periplasm. The enzyme catalyses 2 Fe(II)-[cytochrome] + nitrate + 2 H(+) = 2 Fe(III)-[cytochrome] + nitrite + H2O. In terms of biological role, catalytic subunit of the periplasmic nitrate reductase complex NapAB. Receives electrons from NapB and catalyzes the reduction of nitrate to nitrite. This chain is Periplasmic nitrate reductase, found in Shigella flexneri.